The sequence spans 56 residues: Large ribosomal subunit protein bL33 (56 aa).

The protein belongs to the bacterial ribosomal protein bL33 family.

The sequence is that of Large ribosomal subunit protein bL33 from Campylobacter hominis (strain ATCC BAA-381 / DSM 21671 / CCUG 45161 / LMG 19568 / NCTC 13146 / CH001A).